An 88-amino-acid chain; its full sequence is Putative membrane protein insertion efficiency factor (88 aa).

The interval 64–88 (GVDPVPKKSSSKKTSSTTACGCGHS) is disordered.

The protein belongs to the UPF0161 family.

It is found in the cell inner membrane. Functionally, could be involved in insertion of integral membrane proteins into the membrane. The chain is Putative membrane protein insertion efficiency factor from Herminiimonas arsenicoxydans.